The following is a 547-amino-acid chain: Sterol carrier protein 2 (547 aa).

Ser-3 carries the post-translational modification Phosphoserine. The residue at position 132 (Lys-132) is an N6-acetyllysine; alternate. Lys-132 is modified (N6-succinyllysine; alternate). At Lys-168 the chain carries N6-succinyllysine. An N6-acetyllysine mark is found at Lys-173 and Lys-177. Lys-183 carries the post-translational modification N6-acetyllysine; alternate. Lys-183 bears the N6-succinyllysine; alternate mark. The residue at position 282 (Lys-282) is an N6-succinyllysine. N6-acetyllysine; alternate occurs at positions 341, 432, 438, 443, and 453. Residues Lys-341, Lys-432, Lys-438, Lys-443, and Lys-453 each carry the N6-succinyllysine; alternate modification. The SCP2 domain maps to 433–543 (ANLVFKEIEK…KLQNLQLQPG (111 aa)). Lys-464 carries the post-translational modification N6-succinyllysine. Lys-470 is modified (N6-acetyllysine; alternate). Lys-470 carries the post-translational modification N6-succinyllysine; alternate. An N6-succinyllysine modification is found at Lys-479. Lys-491 is subject to N6-acetyllysine. Lys-492 and Lys-511 each carry N6-succinyllysine. At Ser-516 the chain carries Phosphoserine. N6-succinyllysine is present on residues Lys-522 and Lys-534. A Microbody targeting signal motif is present at residues 545 to 547 (AKL).

The protein in the N-terminal section; belongs to the thiolase-like superfamily. Thiolase family. In terms of assembly, interacts with PEX5; the interaction is essential for peroxisomal import. Post-translationally, preSCP2, a protein with a molecular mass of about 15 kDa, is processed into its mature form (SCP2) by proteolytic cleavage of a 20 residue leader sequence after translocation into peroxisomes. Liver, fibroblasts, and placenta.

Its subcellular location is the peroxisome. It localises to the cytoplasm. The protein localises to the mitochondrion. The protein resides in the endoplasmic reticulum. It carries out the reaction choloyl-CoA + propanoyl-CoA = 3alpha,7alpha,12alpha-trihydroxy-24-oxo-5beta-cholestan-26-oyl-CoA + CoA. The catalysed reaction is 4,8,12-trimethyltridecanoyl-CoA + propanoyl-CoA = 3-oxopristanoyl-CoA + CoA. It catalyses the reaction an acyl-CoA + acetyl-CoA = a 3-oxoacyl-CoA + CoA. The enzyme catalyses hexanoyl-CoA + acetyl-CoA = 3-oxooctanoyl-CoA + CoA. It carries out the reaction tetradecanoyl-CoA + acetyl-CoA = 3-oxohexadecanoyl-CoA + CoA. The catalysed reaction is 3-oxohexadecanedioyl-CoA + CoA = tetradecanedioyl-CoA + acetyl-CoA. It catalyses the reaction propanoyl-CoA + tetradecanoyl-CoA = 3-oxo-2-methylhexadecanoyl-CoA + CoA. The enzyme catalyses butanoyl-CoA + acetyl-CoA = 3-oxohexanoyl-CoA + CoA. It carries out the reaction octanoyl-CoA + acetyl-CoA = 3-oxodecanoyl-CoA + CoA. The catalysed reaction is decanoyl-CoA + acetyl-CoA = 3-oxododecanoyl-CoA + CoA. It catalyses the reaction dodecanoyl-CoA + acetyl-CoA = 3-oxotetradecanoyl-CoA + CoA. The enzyme catalyses hexadecanoyl-CoA + acetyl-CoA = 3-oxooctadecanoyl-CoA + CoA. It carries out the reaction 3-oxo-(9Z-octadecenoyl)-CoA + CoA = (7Z)-hexadecenoyl-CoA + acetyl-CoA. The catalysed reaction is 7-dehydrocholesterol(in) = 7-dehydrocholesterol(out). Plays a crucial role in the peroxisomal oxidation of branched-chain fatty acids. Catalyzes the last step of the peroxisomal beta-oxidation of branched chain fatty acids and the side chain of the bile acid intermediates di- and trihydroxycoprostanic acids (DHCA and THCA). Also active with medium and long straight chain 3-oxoacyl-CoAs. Stimulates the microsomal conversion of 7-dehydrocholesterol to cholesterol and transfers phosphatidylcholine and 7-dehydrocholesterol between membrances, in vitro. Isoforms SCP2 and SCPx cooperate in peroxisomal oxidation of certain naturally occurring tetramethyl-branched fatty acyl-CoAs. Functionally, mediates the transfer of all common phospholipids, cholesterol and gangliosides from the endoplasmic reticulum to the plasma membrane. May play a role in regulating steroidogenesis. Stimulates the microsomal conversion of 7-dehydrocholesterol to cholesterol. Also binds fatty acids and fatty acyl Coenzyme A (CoA) such as phytanoyl-CoA. Involved in the regulation phospholipid synthesis in endoplasmic reticulum enhancing the incorporation of exogenous fatty acid into glycerides. Seems to stimulate the rate-limiting step in phosphatidic acid formation mediated by GPAT3. Isoforms SCP2 and SCPx cooperate in peroxisomal oxidation of certain naturally occurring tetramethyl-branched fatty acyl-CoAs. The chain is Sterol carrier protein 2 from Homo sapiens (Human).